The primary structure comprises 281 residues: Type VI secretion system accessory component TagJ (281 aa).

As to quaternary structure, interacts with TssB1 (via N-terminus). Interacts with ClpV1.

Component of the H1 type VI (H1-T6SS) secretion system that plays a role in the release of toxins targeting both eukaryotic and prokaryotic species. Forms a stable complex with TssB1. This complex, although not crucial for the H1-T6SS function, may fine-tune the assembly of the system. Plays a role in the interaction between ClpV1 and the TssC1/TssB1 sheath. This is Type VI secretion system accessory component TagJ from Pseudomonas aeruginosa (strain ATCC 15692 / DSM 22644 / CIP 104116 / JCM 14847 / LMG 12228 / 1C / PRS 101 / PAO1).